An 831-amino-acid polypeptide reads, in one-letter code: uncharacterized protein (831 aa).

The disordered stretch occupies residues 285–311 (ALNLKRQQLKEEQKEQQSTGDRSDVST). 470 to 477 (GDTGNGKS) contributes to the ATP binding site.

This is an uncharacterized protein from Bacillus subtilis (strain 168).